The following is a 347-amino-acid chain: Endothelin receptor type B (347 aa).

The Extracellular portion of the chain corresponds to 1-7 (EIKETFK). The chain crosses the membrane as a helical span at residues 8 to 32 (YINTVVSCLVFVLGIIGNSTLLRII). The Cytoplasmic portion of the chain corresponds to 33–43 (YKNKCMRNGPN). The helical transmembrane segment at 44–69 (ILIASLALGDLLHIIIDIPISVYKLL) threads the bilayer. Residues 70–81 (AEDWPFGVEMCK) lie on the Extracellular side of the membrane. The cysteines at positions 80 and 161 are disulfide-linked. A helical membrane pass occupies residues 82–103 (LVPFIQKASVGITVLSLCALSI). Residues 104-124 (DRYRAVASWSRIKGIGVPKWT) lie on the Cytoplasmic side of the membrane. The chain crosses the membrane as a helical span at residues 125 to 149 (AVEIVLIWVISVVLAVPEAIAFDMI). Residues 150–177 (TMEYRGKDLRICLLHPTQKTSFMMFYKQ) are Extracellular-facing. The helical transmembrane segment at 178-202 (AKDWWLFSFYFCLPLAITALFYTLM) threads the bilayer. The Cytoplasmic portion of the chain corresponds to 203–230 (TCEMLRKKSGMQIALNDHLKQRREVAKT). The chain crosses the membrane as a helical span at residues 231 to 256 (VFCLVLVFALCWLPLHLSRILKLTIY). The Extracellular segment spans residues 257–268 (DQKDPNRCELLS). A helical membrane pass occupies residues 269-295 (FFLVMDYIGINMASLNSCINPIALYLV). Topologically, residues 296–347 (SKRFQNCFKSCLCCWCQSKDLLSLEERQSCLKFKANDHGYDNFRSSNKYSSS) are cytoplasmic. 2 S-palmitoyl cysteine lipidation sites follow: Cys-309 and Cys-311.

The protein belongs to the G-protein coupled receptor 1 family. Endothelin receptor subfamily. EDNRB sub-subfamily.

Its subcellular location is the cell membrane. Its function is as follows. Non-specific receptor for endothelin 1, 2, and 3. Mediates its action by association with G proteins that activate a phosphatidylinositol-calcium second messenger system. The protein is Endothelin receptor type B (EDNRB) of Coturnix japonica (Japanese quail).